Here is a 249-residue protein sequence, read N- to C-terminus: Probable transcriptional regulatory protein Minf_0651 (249 aa).

This sequence belongs to the TACO1 family.

It is found in the cytoplasm. The protein is Probable transcriptional regulatory protein Minf_0651 of Methylacidiphilum infernorum (isolate V4) (Methylokorus infernorum (strain V4)).